We begin with the raw amino-acid sequence, 245 residues long: Biosynthetic peptidoglycan transglycosylase (245 aa).

Residues 20–42 form a helical membrane-spanning segment; it reads VYAGSVFAGAWLATQLFYLAQIA.

The protein belongs to the glycosyltransferase 51 family.

It localises to the cell inner membrane. The catalysed reaction is [GlcNAc-(1-&gt;4)-Mur2Ac(oyl-L-Ala-gamma-D-Glu-L-Lys-D-Ala-D-Ala)](n)-di-trans,octa-cis-undecaprenyl diphosphate + beta-D-GlcNAc-(1-&gt;4)-Mur2Ac(oyl-L-Ala-gamma-D-Glu-L-Lys-D-Ala-D-Ala)-di-trans,octa-cis-undecaprenyl diphosphate = [GlcNAc-(1-&gt;4)-Mur2Ac(oyl-L-Ala-gamma-D-Glu-L-Lys-D-Ala-D-Ala)](n+1)-di-trans,octa-cis-undecaprenyl diphosphate + di-trans,octa-cis-undecaprenyl diphosphate + H(+). Its pathway is cell wall biogenesis; peptidoglycan biosynthesis. Peptidoglycan polymerase that catalyzes glycan chain elongation from lipid-linked precursors. The protein is Biosynthetic peptidoglycan transglycosylase of Burkholderia cenocepacia (strain HI2424).